Reading from the N-terminus, the 287-residue chain is tRNA N(3)-cytidine methyltransferase METTL6 (287 aa).

S-adenosyl-L-methionine contacts are provided by Trp45, Tyr49, Gly87, Asp110, Asp136, Leu137, and Ile157. The tract at residues 267–287 (RKPPKDPAPTTDSASLLRKEF) is disordered.

The protein belongs to the methyltransferase superfamily. METL family. As to quaternary structure, monomer. Interacts with SARS1/SerRS; interaction is mediated via tRNA(Ser) and is required for N(3)-methylcytidine methylation.

The protein resides in the cytoplasm. It is found in the nucleus. The catalysed reaction is cytidine(32) in tRNA(Ser) + S-adenosyl-L-methionine = N(3)-methylcytidine(32) in tRNA(Ser) + S-adenosyl-L-homocysteine + H(+). Its function is as follows. S-adenosyl-L-methionine-dependent methyltransferase that mediates N(3)-methylcytidine modification of residue 32 of the tRNA anticodon loop of tRNA(Ser), including tRNA(Ser)(UGA) and tRNA(Ser)(GCU). Interaction with SARS1/SerRS is required for N(3)-methylcytidine methylation. The polypeptide is tRNA N(3)-cytidine methyltransferase METTL6 (Mettl6) (Rattus norvegicus (Rat)).